A 597-amino-acid chain; its full sequence is Elongation factor 4 (597 aa).

The tr-type G domain occupies 2–184 (DHIRNFSIIA…ALVAKVPPPK (183 aa)). Residues 14 to 19 (DHGKST) and 131 to 134 (NKID) contribute to the GTP site.

The protein belongs to the TRAFAC class translation factor GTPase superfamily. Classic translation factor GTPase family. LepA subfamily.

The protein localises to the cell inner membrane. It catalyses the reaction GTP + H2O = GDP + phosphate + H(+). Required for accurate and efficient protein synthesis under certain stress conditions. May act as a fidelity factor of the translation reaction, by catalyzing a one-codon backward translocation of tRNAs on improperly translocated ribosomes. Back-translocation proceeds from a post-translocation (POST) complex to a pre-translocation (PRE) complex, thus giving elongation factor G a second chance to translocate the tRNAs correctly. Binds to ribosomes in a GTP-dependent manner. This Paraburkholderia phytofirmans (strain DSM 17436 / LMG 22146 / PsJN) (Burkholderia phytofirmans) protein is Elongation factor 4.